Here is a 123-residue protein sequence, read N- to C-terminus: Amoebiasin-2 (123 aa).

An N-terminal signal peptide occupies residues Met-1–Ala-16. A BC loop motif is present at residues Asn-45–Tyr-50. Positions Glu-71–Pro-81 match the DE loop motif. An FG loop motif is present at residues Pro-105 to Arg-114.

It belongs to the protease inhibitor I42 family. As to quaternary structure, monomer. May form homodimer. Interacts with cysteine protease CP2. Interacts with cysteine protease CP5.

It is found in the cytoplasmic vesicle. Its subcellular location is the lysosome. The protein localises to the phagosome. Functionally, cysteine protease inhibitor. Inhibits cysteine proteases CP1, CP2 and to a lesser extent CP5. This is Amoebiasin-2 from Entamoeba histolytica (strain ATCC 30459 / HM-1:IMSS / ABRM).